Reading from the N-terminus, the 308-residue chain is Solute carrier family 25 member 47 (308 aa).

3 Solcar repeats span residues 1 to 80 (MDFV…CLAH), 93 to 206 (PTKA…LCEW), and 215 to 302 (PDVP…VLRL). The next 6 helical transmembrane spans lie at 3-23 (FVAG…LDTV), 49-69 (VWGF…VSSV), 98-116 (ITLS…TSPT), 190-210 (GHSF…LSPA), 217-237 (VPGV…VATP), and 273-293 (VLFK…MVVF).

It belongs to the mitochondrial carrier (TC 2.A.29) family. Specifically expressed in liver.

The protein localises to the mitochondrion inner membrane. It is found in the mitochondrion outer membrane. It carries out the reaction NAD(+)(in) = NAD(+)(out). It catalyses the reaction acetyl-CoA(in) = acetyl-CoA(out). In terms of biological role, mitochondrial NAD(+) transporter that acts as a 'metabolic gate' in hepatic lipogenesis. Provides NAD(+) substrate to mitochondrial SIRT3 deacetylase and enables its NAD(+)-dependent activities in mitochondrial energy metabolism. This triggers downstream activation of PRKAA1/AMPK-alpha signaling cascade that negatively regulates sterol regulatory element-binding protein (SREBP) transcriptional activities and ATP-consuming lipogenesis to restore cellular energy balance. May transport other mitochondrial metabolites having an aromatic nucleotide and phosphate groups, such as acetyl-CoA. Does not transport amino acids. The transport mechanism remains to be elucidated. The protein is Solute carrier family 25 member 47 of Homo sapiens (Human).